The following is a 125-amino-acid chain: Scinderin (125 aa).

At tyrosine 13 the chain carries Phosphotyrosine. A 1,2-diacyl-sn-glycero-3-phospho-(1D-myo-inositol-4,5-bisphosphate) contacts are provided by residues 23–30 and 49–57; these read KGGLKYKA and RLLHVKGRR. The Gelsolin-like 1 repeat unit spans residues 59-99; that stretch reads VRATEVPLSWDSFNKGDCFIIDLGSEIYQWFGSSCNKYERL.

The protein belongs to the villin/gelsolin family.

The protein localises to the cytoplasm. The protein resides in the cytoskeleton. Its subcellular location is the cell projection. It is found in the podosome. Functionally, ca(2+)-dependent actin filament-severing protein that has a regulatory function in exocytosis by affecting the organization of the microfilament network underneath the plasma membrane. In vitro, also has barbed end capping and nucleating activities in the presence of Ca(2+). Severing activity is inhibited by phosphatidylinositol 4,5-bis-phosphate (PIP2). Required for megakaryocyte differentiation, maturation, polyploidization and apoptosis with the release of platelet-like particles. Plays a role in osteoclastogenesis (OCG) and actin cytoskeletal organization in osteoclasts. Regulates chondrocyte proliferation and differentiation. Inhibits cell proliferation and tumorigenesis. Signaling is mediated by MAPK, p38 and JNK pathways. The chain is Scinderin (SCIN) from Sus scrofa (Pig).